The primary structure comprises 444 residues: MSEMTPREIVSELDQHIIGQADAKRAVAIALRNRWRRMQLQEPLRHEVTPKNILMIGPTGVGKTEIARRLAKLANAPFIKVEATKFTEVGYVGKEVDSIIRDLTDSAMKLVRQQEIAKNRARAEDAAEERILDALLPPAKNQWGEVENHDSHSSTRQAFRKKLREGQLDDKEIEIDVSAGVSMGVEIMAPPGMEEMTNQLQSLFQNLGSDKTKKRKMKIKDALKTLIDDEAAKLINPEELKQKAIDAVEQNGIVFIDEIDKICKKGEYSGADVSREGVQRDLLPLVEGSTVSTKHGMVKTDHILFIASGAFQVARPSDLIPELQGRLPIRVELTALSAADFERILTEPHASLTEQYKALMATEGVNIEFTTEAVKKIAEAAFRVNEKTENIGARRLHTVMERLMDKISFSASDMNGQTVNIDAAYVADALGEVVENEDLSRFIL.

ATP contacts are provided by residues Ile-18 and 60-65 (GVGKTE). A disordered region spans residues 143 to 163 (WGEVENHDSHSSTRQAFRKKL). Residues Asp-257, Glu-322, and Arg-394 each contribute to the ATP site.

The protein belongs to the ClpX chaperone family. HslU subfamily. A double ring-shaped homohexamer of HslV is capped on each side by a ring-shaped HslU homohexamer. The assembly of the HslU/HslV complex is dependent on binding of ATP.

It localises to the cytoplasm. Functionally, ATPase subunit of a proteasome-like degradation complex; this subunit has chaperone activity. The binding of ATP and its subsequent hydrolysis by HslU are essential for unfolding of protein substrates subsequently hydrolyzed by HslV. HslU recognizes the N-terminal part of its protein substrates and unfolds these before they are guided to HslV for hydrolysis. This chain is ATP-dependent protease ATPase subunit HslU, found in Haemophilus influenzae (strain 86-028NP).